The chain runs to 121 residues: NAD(P)H-quinone oxidoreductase subunit M (121 aa).

It belongs to the complex I NdhM subunit family. In terms of assembly, NDH-1 can be composed of about 15 different subunits; different subcomplexes with different compositions have been identified which probably have different functions.

It localises to the cellular thylakoid membrane. It catalyses the reaction a plastoquinone + NADH + (n+1) H(+)(in) = a plastoquinol + NAD(+) + n H(+)(out). The catalysed reaction is a plastoquinone + NADPH + (n+1) H(+)(in) = a plastoquinol + NADP(+) + n H(+)(out). NDH-1 shuttles electrons from an unknown electron donor, via FMN and iron-sulfur (Fe-S) centers, to quinones in the respiratory and/or the photosynthetic chain. The immediate electron acceptor for the enzyme in this species is believed to be plastoquinone. Couples the redox reaction to proton translocation, and thus conserves the redox energy in a proton gradient. Cyanobacterial NDH-1 also plays a role in inorganic carbon-concentration. This Synechococcus sp. (strain JA-3-3Ab) (Cyanobacteria bacterium Yellowstone A-Prime) protein is NAD(P)H-quinone oxidoreductase subunit M.